The primary structure comprises 502 residues: ATP synthase subunit alpha (502 aa).

An ATP-binding site is contributed by G169 to T176.

The protein belongs to the ATPase alpha/beta chains family. As to quaternary structure, F-type ATPases have 2 components, CF(1) - the catalytic core - and CF(0) - the membrane proton channel. CF(1) has five subunits: alpha(3), beta(3), gamma(1), delta(1), epsilon(1). CF(0) has three main subunits: a(1), b(2) and c(9-12). The alpha and beta chains form an alternating ring which encloses part of the gamma chain. CF(1) is attached to CF(0) by a central stalk formed by the gamma and epsilon chains, while a peripheral stalk is formed by the delta and b chains.

The protein resides in the cell membrane. It catalyses the reaction ATP + H2O + 4 H(+)(in) = ADP + phosphate + 5 H(+)(out). Produces ATP from ADP in the presence of a proton gradient across the membrane. The alpha chain is a regulatory subunit. The sequence is that of ATP synthase subunit alpha from Bacillus sp. (strain PS3).